We begin with the raw amino-acid sequence, 399 residues long: uncharacterized protein (399 aa).

This is an uncharacterized protein from Aquifex aeolicus (strain VF5).